Consider the following 402-residue polypeptide: Tryptophan synthase beta chain (402 aa).

N6-(pyridoxal phosphate)lysine is present on Lys-91.

It belongs to the TrpB family. Tetramer of two alpha and two beta chains. Requires pyridoxal 5'-phosphate as cofactor.

The catalysed reaction is (1S,2R)-1-C-(indol-3-yl)glycerol 3-phosphate + L-serine = D-glyceraldehyde 3-phosphate + L-tryptophan + H2O. It functions in the pathway amino-acid biosynthesis; L-tryptophan biosynthesis; L-tryptophan from chorismate: step 5/5. In terms of biological role, the beta subunit is responsible for the synthesis of L-tryptophan from indole and L-serine. This chain is Tryptophan synthase beta chain, found in Streptococcus thermophilus (strain ATCC BAA-250 / LMG 18311).